Reading from the N-terminus, the 150-residue chain is Ribonuclease H (150 aa).

The RNase H type-1 domain maps to 1–141 (MKFIEVHTDG…VDVLARNQAI (141 aa)). Residues Asp9, Glu47, Asp69, and Asp133 each coordinate Mg(2+).

This sequence belongs to the RNase H family. In terms of assembly, monomer. Mg(2+) serves as cofactor.

The protein resides in the cytoplasm. It catalyses the reaction Endonucleolytic cleavage to 5'-phosphomonoester.. In terms of biological role, endonuclease that specifically degrades the RNA of RNA-DNA hybrids. This Xanthomonas euvesicatoria pv. vesicatoria (strain 85-10) (Xanthomonas campestris pv. vesicatoria) protein is Ribonuclease H.